A 707-amino-acid chain; its full sequence is Protein kinase C theta type (707 aa).

The C2 domain occupies 1–107 (MSPFLRIGLS…KNNGRTEIWL (107 aa)). Residue tyrosine 90 is modified to Phosphotyrosine; by LCK. A Phorbol-ester/DAG-type 1 zinc finger spans residues 159-209 (CHEFTATFFPQPTFCSVCHEFVWGLNKQGYQCRRCNAAIHKKCIDKVIAKC). Residue threonine 219 is modified to Phosphothreonine; by autocatalysis. The Phorbol-ester/DAG-type 2 zinc-finger motif lies at 231–281 (PHRFKVYNYKSPTFCEHCGTLLWGLARQGLKCDACGMNVHHRCQTKVANLC). A Phosphoserine modification is found at serine 348. A Protein kinase domain is found at 380 to 634 (FILHKMLGKG…RGDIRQHPLF (255 aa)). ATP-binding positions include 386-394 (LGKGSFGKV) and lysine 409. Aspartate 504 (proton acceptor) is an active-site residue. A Phosphothreonine; by PDPK1 modification is found at threonine 538. The 72-residue stretch at 635 to 706 (REINWEELER…INPGMETLIC (72 aa)) folds into the AGC-kinase C-terminal domain. Phosphoserine occurs at positions 676 and 685. At serine 695 the chain carries Phosphoserine; by autocatalysis.

This sequence belongs to the protein kinase superfamily. AGC Ser/Thr protein kinase family. PKC subfamily. Part of a membrane raft complex composed at least of BCL10, CARD11, MALT1 and IKBKB. Interacts with GLRX3 (via N-terminus). Interacts with ECT2. Interacts with CCDC88A/GIV; the interaction leads to phosphorylation of CCDC88A and inhibition of its guanine nucleotide exchange factor activity. Interacts with CD28. Mg(2+) is required as a cofactor. Autophosphorylation at Thr-219 is required for targeting to the TCR and cellular function of PRKCQ upon antigen receptor ligation. Following TCR stimulation, phosphorylated at Tyr-90 and Ser-685.

It localises to the cytoplasm. The protein resides in the cell membrane. The enzyme catalyses L-seryl-[protein] + ATP = O-phospho-L-seryl-[protein] + ADP + H(+). The catalysed reaction is L-threonyl-[protein] + ATP = O-phospho-L-threonyl-[protein] + ADP + H(+). Novel PKCs (PRKCD, PRKCE, PRKCH and PRKCQ) are calcium-insensitive, but activated by diacylglycerol (DAG) and phosphatidylserine. Three specific sites; Thr-538 (activation loop of the kinase domain), Ser-676 (turn motif) and Ser-695 (hydrophobic region), need to be phosphorylated for its full activation. Calcium-independent, phospholipid- and diacylglycerol (DAG)-dependent serine/threonine-protein kinase that mediates non-redundant functions in T-cell receptor (TCR) signaling, including T-cells activation, proliferation, differentiation and survival, by mediating activation of multiple transcription factors such as NF-kappa-B, JUN, NFATC1 and NFATC2. In TCR-CD3/CD28-co-stimulated T-cells, is required for the activation of NF-kappa-B and JUN, which in turn are essential for IL2 production, and participates in the calcium-dependent NFATC1 and NFATC2 transactivation. Mediates the activation of the canonical NF-kappa-B pathway (NFKB1) by direct phosphorylation of CARD11 on several serine residues, inducing CARD11 association with lipid rafts and recruitment of the BCL10-MALT1 complex, which then activates IKK complex, resulting in nuclear translocation and activation of NFKB1. May also play an indirect role in activation of the non-canonical NF-kappa-B (NFKB2) pathway. In the signaling pathway leading to JUN activation, acts by phosphorylating the mediator STK39/SPAK and may not act through MAP kinases signaling. Plays a critical role in TCR/CD28-induced NFATC1 and NFATC2 transactivation by participating in the regulation of reduced inositol 1,4,5-trisphosphate generation and intracellular calcium mobilization. After costimulation of T-cells through CD28 can phosphorylate CBLB and is required for the ubiquitination and subsequent degradation of CBLB, which is a prerequisite for the activation of TCR. During T-cells differentiation, plays an important role in the development of T-helper 2 (Th2) cells following immune and inflammatory responses, and, in the development of inflammatory autoimmune diseases, is necessary for the activation of IL17-producing Th17 cells. May play a minor role in Th1 response. Upon TCR stimulation, mediates T-cell protective survival signal by phosphorylating BAD, thus protecting T-cells from BAD-induced apoptosis, and by up-regulating BCL-X(L)/BCL2L1 levels through NF-kappa-B and JUN pathways. In platelets, regulates signal transduction downstream of the ITGA2B, CD36/GP4, F2R/PAR1 and F2RL3/PAR4 receptors, playing a positive role in 'outside-in' signaling and granule secretion signal transduction. May relay signals from the activated ITGA2B receptor by regulating the uncoupling of WASP and WIPF1, thereby permitting the regulation of actin filament nucleation and branching activity of the Arp2/3 complex. May mediate inhibitory effects of free fatty acids on insulin signaling by phosphorylating IRS1, which in turn blocks IRS1 tyrosine phosphorylation and downstream activation of the PI3K/AKT pathway. Phosphorylates MSN (moesin) in the presence of phosphatidylglycerol or phosphatidylinositol. Phosphorylates PDPK1 at 'Ser-504' and 'Ser-532' and negatively regulates its ability to phosphorylate PKB/AKT1. Phosphorylates CCDC88A/GIV and inhibits its guanine nucleotide exchange factor activity. Phosphorylates and activates LRRK1, which phosphorylates RAB proteins involved in intracellular trafficking. In Rattus norvegicus (Rat), this protein is Protein kinase C theta type (Prkcq).